We begin with the raw amino-acid sequence, 307 residues long: Low-salt glycan biosynthesis hexosyltransferase Agl10 (307 aa).

It belongs to the glycosyltransferase 2 family.

It functions in the pathway protein modification; protein glycosylation. It participates in cell surface structure biogenesis; S-layer biogenesis. Hexosyltransferase involved in N-glycan biosynthetic pathway that takes place under low-salt conditions (1.75 M instead of 3.4 M). Participates in the formation of the tetrasaccharide present at 'Asn-532' of S-layer glycoprotein Csg, consisting of a sulfated hexose, 2 hexoses and rhamnose. Involved in the addition of final rhamnose (sugar 4) of the tetrasaccharide on the dolichol phosphate carrier. The chain is Low-salt glycan biosynthesis hexosyltransferase Agl10 (agl10) from Haloferax volcanii (strain ATCC 29605 / DSM 3757 / JCM 8879 / NBRC 14742 / NCIMB 2012 / VKM B-1768 / DS2) (Halobacterium volcanii).